An 807-amino-acid polypeptide reads, in one-letter code: Hyaluronate lyase (807 aa).

A signal peptide spans Met1–Ala40. Catalysis depends on residues Asn241, His297, and Tyr306.

It belongs to the polysaccharide lyase 8 family.

It localises to the secreted. It catalyses the reaction [hyaluronan](n) = n 3-(4-deoxy-beta-D-gluc-4-enuronosyl)-N-acetyl-D-glucosamine + H2O. The sequence is that of Hyaluronate lyase from Staphylococcus aureus (strain NCTC 8325 / PS 47).